The primary structure comprises 187 residues: Elongation factor P (187 aa).

This sequence belongs to the elongation factor P family.

The protein resides in the cytoplasm. Its pathway is protein biosynthesis; polypeptide chain elongation. Functionally, involved in peptide bond synthesis. Stimulates efficient translation and peptide-bond synthesis on native or reconstituted 70S ribosomes in vitro. Probably functions indirectly by altering the affinity of the ribosome for aminoacyl-tRNA, thus increasing their reactivity as acceptors for peptidyl transferase. The chain is Elongation factor P from Mycolicibacterium vanbaalenii (strain DSM 7251 / JCM 13017 / BCRC 16820 / KCTC 9966 / NRRL B-24157 / PYR-1) (Mycobacterium vanbaalenii).